A 171-amino-acid polypeptide reads, in one-letter code: ATP synthase subunit b 2 (171 aa).

A helical membrane pass occupies residues alanine 9–phenylalanine 29.

The protein belongs to the ATPase B chain family. F-type ATPases have 2 components, F(1) - the catalytic core - and F(0) - the membrane proton channel. F(1) has five subunits: alpha(3), beta(3), gamma(1), delta(1), epsilon(1). F(0) has three main subunits: a(1), b(2) and c(10-14). The alpha and beta chains form an alternating ring which encloses part of the gamma chain. F(1) is attached to F(0) by a central stalk formed by the gamma and epsilon chains, while a peripheral stalk is formed by the delta and b chains.

It localises to the cell inner membrane. Its function is as follows. F(1)F(0) ATP synthase produces ATP from ADP in the presence of a proton or sodium gradient. F-type ATPases consist of two structural domains, F(1) containing the extramembraneous catalytic core and F(0) containing the membrane proton channel, linked together by a central stalk and a peripheral stalk. During catalysis, ATP synthesis in the catalytic domain of F(1) is coupled via a rotary mechanism of the central stalk subunits to proton translocation. Functionally, component of the F(0) channel, it forms part of the peripheral stalk, linking F(1) to F(0). This Granulibacter bethesdensis (strain ATCC BAA-1260 / CGDNIH1) protein is ATP synthase subunit b 2.